The primary structure comprises 851 residues: DNA mismatch repair protein MutS (851 aa).

614–621 (GPNMGGKS) serves as a coordination point for ATP.

The protein belongs to the DNA mismatch repair MutS family.

In terms of biological role, this protein is involved in the repair of mismatches in DNA. It is possible that it carries out the mismatch recognition step. This protein has a weak ATPase activity. The chain is DNA mismatch repair protein MutS from Serratia proteamaculans (strain 568).